The chain runs to 376 residues: Protein STRICTOSIDINE SYNTHASE-LIKE 2 (376 aa).

Residues 1 to 23 (MMKLLLVVATSVALIFSVTDLSG) form the signal peptide. N-linked (GlcNAc...) asparagine glycans are attached at residues Asn-79 and Asn-244.

The protein belongs to the strictosidine synthase family.

The protein resides in the vacuole. This chain is Protein STRICTOSIDINE SYNTHASE-LIKE 2, found in Arabidopsis thaliana (Mouse-ear cress).